Reading from the N-terminus, the 66-residue chain is Cold shock protein 1 (66 aa).

A CSD domain is found at 4-63 (GTVKWFNADKGYGFITGEDGNDVFVHFSAIQTDGFKTLEEGQKVTFDEESSDRGPQAANV). The tract at residues 47–66 (VTFDEESSDRGPQAANVVPQ) is disordered.

Its subcellular location is the cytoplasm. The chain is Cold shock protein 1 (csp) from Lactiplantibacillus plantarum (strain ATCC BAA-793 / NCIMB 8826 / WCFS1) (Lactobacillus plantarum).